A 632-amino-acid chain; its full sequence is Putative golgin subfamily A member 8I (632 aa).

The segment at 1–77 (MAEETQHNKL…SSATLKDLES (77 aa)) is disordered. Positions 38–50 (TNGSIPQTATSGG) are enriched in polar residues. Coiled coils occupy residues 86 to 154 (LDSR…HMKR) and 209 to 421 (KLEQ…SLMA). Positions 352–362 (KQEERIQEQHK) are enriched in basic and acidic residues. Disordered regions lie at residues 352 to 383 (KQEE…ENKS), 423 to 445 (PGEG…PMPS), 496 to 524 (LSEP…DEGE), and 550 to 569 (AHNP…ELGA). The segment covering 508 to 520 (LGGGHHQAGAQGG) has biased composition (gly residues). The interval 529-632 (AADGIAAYSN…CWAWLPRRRR (104 aa)) is golgi-targeting domain. Over residues 555-568 (DEPGPGAPAPQELG) the composition is skewed to low complexity.

It belongs to the GOLGA8 family.

The protein localises to the golgi apparatus. Its subcellular location is the golgi stack membrane. Its function is as follows. May be involved in maintaining Golgi structure. The protein is Putative golgin subfamily A member 8I of Homo sapiens (Human).